The chain runs to 331 residues: Ketol-acid reductoisomerase (NADP(+)) (331 aa).

In terms of domain architecture, KARI N-terminal Rossmann spans 2–182 (ARMYYDTDAN…GGTRAGILET (181 aa)). NADP(+)-binding positions include 25–28 (YGSQ), Ser51, Ser53, and 83–86 (DEVQ). Residue His108 is part of the active site. Gly134 serves as a coordination point for NADP(+). Residues 183–328 (TFREETETDL…KDLRAMFSWL (146 aa)) form the KARI C-terminal knotted domain. Asp191, Glu195, Glu227, and Glu231 together coordinate Mg(2+). Ser252 contributes to the substrate binding site.

It belongs to the ketol-acid reductoisomerase family. The cofactor is Mg(2+).

It carries out the reaction (2R)-2,3-dihydroxy-3-methylbutanoate + NADP(+) = (2S)-2-acetolactate + NADPH + H(+). The catalysed reaction is (2R,3R)-2,3-dihydroxy-3-methylpentanoate + NADP(+) = (S)-2-ethyl-2-hydroxy-3-oxobutanoate + NADPH + H(+). It functions in the pathway amino-acid biosynthesis; L-isoleucine biosynthesis; L-isoleucine from 2-oxobutanoate: step 2/4. The protein operates within amino-acid biosynthesis; L-valine biosynthesis; L-valine from pyruvate: step 2/4. Its function is as follows. Involved in the biosynthesis of branched-chain amino acids (BCAA). Catalyzes an alkyl-migration followed by a ketol-acid reduction of (S)-2-acetolactate (S2AL) to yield (R)-2,3-dihydroxy-isovalerate. In the isomerase reaction, S2AL is rearranged via a Mg-dependent methyl migration to produce 3-hydroxy-3-methyl-2-ketobutyrate (HMKB). In the reductase reaction, this 2-ketoacid undergoes a metal-dependent reduction by NADPH to yield (R)-2,3-dihydroxy-isovalerate. This Rippkaea orientalis (strain PCC 8801 / RF-1) (Cyanothece sp. (strain PCC 8801)) protein is Ketol-acid reductoisomerase (NADP(+)).